The primary structure comprises 241 residues: Small ribosomal subunit protein uS3 (241 aa).

The KH type-2 domain occupies 39-107 (IRTYLKKELY…PLSVNIKEEK (69 aa)). Residues 214 to 241 (AEVKEEQQKEGARRPKRAPKRENSGKAE) are disordered. Residues 215–226 (EVKEEQQKEGAR) show a composition bias toward basic and acidic residues.

This sequence belongs to the universal ribosomal protein uS3 family. Part of the 30S ribosomal subunit. Forms a tight complex with proteins S10 and S14.

Functionally, binds the lower part of the 30S subunit head. Binds mRNA in the 70S ribosome, positioning it for translation. The protein is Small ribosomal subunit protein uS3 of Sulfurimonas denitrificans (strain ATCC 33889 / DSM 1251) (Thiomicrospira denitrificans (strain ATCC 33889 / DSM 1251)).